The primary structure comprises 489 residues: Serine/arginine-rich splicing factor 4 (489 aa).

An RRM 1 domain is found at 2–72; it reads PRVYIGRLSY…ERVIVEHARG (71 aa). Disordered regions lie at residues 72–95 and 169–489; these read GPRRDGSYGSGRSGYGYRRSGRDK and KIRL…HSRS. 2 positions are modified to phosphoserine: Ser78 and Ser84. An RRM 2 domain is found at 104 to 177; the sequence is YRLIVENLSS…RKIRLVEDKP (74 aa). 2 stretches are compositionally biased toward basic residues: residues 179–206 and 214–246; these read SRRRRSYSRSRSHSRSRSRSRHSRKSRS and SHSKSRSRSRSGSHSRSKSRSRSQSRSRSKKEK. The span at 247–279 shows a compositional bias: basic and acidic residues; it reads SRSPSKDNKSRSRSRSPDKSRSKSKDHAEDKLQ. Phosphoserine is present on residues Ser289, Ser291, and Ser293. Over residues 293 to 332 the composition is skewed to basic and acidic residues; the sequence is SRHDSKSRSRSQERRAEEERRRSVSRARSQEKSRSQEKSL. The segment covering 333 to 356 has biased composition (basic residues); it reads LKSRSRSRSRSRSRSKDKRKGRKR. 2 stretches are compositionally biased toward basic and acidic residues: residues 357-370 and 394-426; these read SRDESRSRSRSKSE and KDTDHSRSPSRSVSKEREHAKAESGQRGSRAEG. Residues Ser441, Ser453, and Ser455 each carry the phosphoserine modification. Basic residues-rich tracts occupy residues 456 to 469 and 479 to 489; these read RSKSASKTRSRSKS and SRSRSRSHSRS.

This sequence belongs to the splicing factor SR family. As to quaternary structure, found in a pre-mRNA splicing complex with SRSF4/SFRS4, SRSF5/SFRS5, SNRNP70, SNRPA1, SRRM1 and SRRM2. Interacts with PNN. Post-translationally, extensively phosphorylated on serine residues in the RS domain.

The protein localises to the nucleus speckle. Plays a role in alternative splice site selection during pre-mRNA splicing. Represses the splicing of MAPT/Tau exon 10. In Mus musculus (Mouse), this protein is Serine/arginine-rich splicing factor 4 (Srsf4).